The following is a 316-amino-acid chain: Ribosomal RNA small subunit methyltransferase H (316 aa).

S-adenosyl-L-methionine is bound by residues 35–37 (AGH), aspartate 55, phenylalanine 84, aspartate 105, and glutamine 112.

This sequence belongs to the methyltransferase superfamily. RsmH family.

Its subcellular location is the cytoplasm. It carries out the reaction cytidine(1402) in 16S rRNA + S-adenosyl-L-methionine = N(4)-methylcytidine(1402) in 16S rRNA + S-adenosyl-L-homocysteine + H(+). Functionally, specifically methylates the N4 position of cytidine in position 1402 (C1402) of 16S rRNA. The protein is Ribosomal RNA small subunit methyltransferase H of Streptococcus pneumoniae (strain Taiwan19F-14).